Reading from the N-terminus, the 277-residue chain is Glutamate racemase (277 aa).

Residues 13 to 14 (DS) and 45 to 46 (YG) each bind substrate. Cys77 (proton donor/acceptor) is an active-site residue. Residue 78 to 79 (NT) coordinates substrate. The Proton donor/acceptor role is filled by Cys192. Residue 193 to 194 (TH) coordinates substrate.

The protein belongs to the aspartate/glutamate racemases family.

The catalysed reaction is L-glutamate = D-glutamate. The protein operates within cell wall biogenesis; peptidoglycan biosynthesis. Its function is as follows. Provides the (R)-glutamate required for cell wall biosynthesis. The sequence is that of Glutamate racemase from Rhizobium meliloti (strain 1021) (Ensifer meliloti).